Here is a 411-residue protein sequence, read N- to C-terminus: Arginine deiminase (411 aa).

The Amidino-cysteine intermediate role is filled by Cys401.

Belongs to the arginine deiminase family. Glycosylated.

It localises to the cytoplasm. It carries out the reaction L-arginine + H2O = L-citrulline + NH4(+). It participates in amino-acid degradation; L-arginine degradation via ADI pathway; carbamoyl phosphate from L-arginine: step 1/2. This is Arginine deiminase (arcA) from Streptococcus pyogenes serotype M1.